The chain runs to 133 residues: Hydrogenase maturation factor HypA (133 aa).

Residue histidine 2 coordinates Ni(2+). Positions 73, 75, 105, and 108 each coordinate Zn(2+).

This sequence belongs to the HypA/HybF family.

Functionally, involved in the maturation of [NiFe] hydrogenases. Required for nickel insertion into the metal center of the hydrogenase. The polypeptide is Hydrogenase maturation factor HypA (Methanosarcina acetivorans (strain ATCC 35395 / DSM 2834 / JCM 12185 / C2A)).